The chain runs to 473 residues: MKGVATDIGTIHFIGIGGIGMSGIAEVMHNLGYKVQGSDVAESYVVEGLRKRGIAVMIGHKAENLGDAAVVVTSTAIKRGNPEVELALEKRVPVVRRAEMLAELMRLKSTVAIAGTHGKTTTTSMVAALLDAGGVDPTVINGGIINSYGSNARLGASDWMVVEADESDGSFLRLDGTIAVVTNIDPEHLDHYGSFDKVKDCFVEFVENVPFYGAALLCIDHPEVQAIIPRVRDRKVVTYGFSAQADVRGDNVTPIPGGNRFDVVVRNRDGDTRRIEGVTLPMPGRHNVQNALAAIGVALEMNISDAIIATGFAKFGGVKRRFTKVGEVPVGDGVATVIDDYGHHPVEIRAVLAAAREGARAKVIAVVQPHRFTRLRDLMTEFQTAFNDADTVYVAPVYAAGEAPIDGVDAAALVAGLKQRGHRSAQVIAGPEALAATLAATIAADDMVICLGAGDITKWAAGLSEAIAKETAR.

115-121 (GTHGKTT) is an ATP binding site.

It belongs to the MurCDEF family.

The protein localises to the cytoplasm. The catalysed reaction is UDP-N-acetyl-alpha-D-muramate + L-alanine + ATP = UDP-N-acetyl-alpha-D-muramoyl-L-alanine + ADP + phosphate + H(+). It participates in cell wall biogenesis; peptidoglycan biosynthesis. Functionally, cell wall formation. This chain is UDP-N-acetylmuramate--L-alanine ligase, found in Rhizorhabdus wittichii (strain DSM 6014 / CCUG 31198 / JCM 15750 / NBRC 105917 / EY 4224 / RW1) (Sphingomonas wittichii).